Reading from the N-terminus, the 839-residue chain is MEPNIYQLALAALFGASFVAVSGFFMHFKALNLVLERGKERKENPDGDEPQNPTLVRRRSQVRRKVNDQYGRSPASLPDATPFTDGGGGGGGDTGRSNGHVYVDEIPPGLPRLHTPSEGRASVHGASSIRKTGSFVRPISPKSPVASASAFESVEESDDDDNLTNSEGLDASYLQANGDNEMPADANEEQISMAASSMIRSHSVSGDLHGVQPDPIAADILRKEPEQETFVRLNVPLEVPTSDEVEAYKCLQECLELRKRYVFQETVAPWEKEVISDPSTPKPNTEPFAHYPQGKSDHCFEMQDGVVHVFANKDAKEDLFPVADATAFFTDLHHVLKVIAAGNIRTLCHRRLVLLEQKFNLHLMLNADKEFLAQKSAPHRDFYNVRKVDTHVHHSACMNQKHLLRFIKSKLRKEPDEVVIFRDGTYLTLREVFESLDLTGYDLNVDLLDVHADKSTFHRFDKFNLKYNPCGQSRLREIFLKQDNLIQGRFLGEITKQVFSDLEASKYQMAEYRISIYGRKMSEWDQLASWIVNNDLYSENVVWLIQLPRLYNIYKDMGIVTSFQNILDNIFIPLFEATVDPDSHPQLHVFLKQVVGFDLVDDESKPERRPTKHMPTPAQWTNAFNPAFSYYVYYCYANLYVLNKLRESKGMTTITLRPHSGEAGDIDHLAATFLTCHSIAHGINLRKSPVLQYLYYLAQIGLAMSPLSNNSLFLDYHRNPFPVFFLRGLNVSLSTDDPLQIHLTKEPLVEEYSIAASVWKLSACDLCEIARNSVYQSGFSHALKSHWIGKDYYKRGPDGNDIHKTNVPHIRVEFRDTIWKEEMQQVYLGKAVISDEVVP.

A helical transmembrane segment spans residues 8 to 28; that stretch reads LALAALFGASFVAVSGFFMHF. Residues 40–167 form a disordered region; that stretch reads ERKENPDGDE…DDDDNLTNSE (128 aa). Residues 85–94 are compositionally biased toward gly residues; that stretch reads DGGGGGGGDT. Phosphoserine occurs at positions 134 and 140. Over residues 153–162 the composition is skewed to acidic residues; it reads SVEESDDDDN. A Phosphoserine modification is found at Ser203. 289–296 provides a ligand contact to ATP; sequence AHYPQGKS. The Zn(2+) site is built by His391 and His393. Substrate-binding positions include His393 and 462–467; that span reads KFNLKY. His659 serves as a coordination point for Zn(2+). Substrate is bound at residue Glu662. His681 functions as the Proton acceptor in the catalytic mechanism. Asp736 serves as a coordination point for Zn(2+). 737 to 740 serves as a coordination point for substrate; sequence DPLQ.

Belongs to the metallo-dependent hydrolases superfamily. Adenosine and AMP deaminases family. As to quaternary structure, homodimer. Interacts with AHK4. Interacts with EER5. Requires Zn(2+) as cofactor. Expressed in seedlings, roots, leaves, flowers, pollen grains, pollen tubes and siliques, and at a lower level in stems.

It localises to the membrane. Its subcellular location is the microsome membrane. It carries out the reaction AMP + H2O + H(+) = IMP + NH4(+). It participates in purine metabolism; IMP biosynthesis via salvage pathway; IMP from AMP: step 1/1. Activated by ATP. Activated by sulfate ions (in vitro). Inhibited by phosphate ions. Functionally, AMP deaminase plays a critical role in energy metabolism. Essential for the transition from zygote to embryo. In Arabidopsis thaliana (Mouse-ear cress), this protein is AMP deaminase.